The following is a 274-amino-acid chain: Thiamine kinase (274 aa).

It belongs to the thiamine kinase family.

The enzyme catalyses thiamine + ATP = thiamine phosphate + ADP + H(+). It functions in the pathway cofactor biosynthesis; thiamine diphosphate biosynthesis; thiamine phosphate from thiamine: step 1/1. In terms of biological role, catalyzes the ATP-dependent phosphorylation of thiamine to thiamine phosphate. Is involved in thiamine salvage. This chain is Thiamine kinase, found in Escherichia coli O157:H7 (strain EC4115 / EHEC).